Here is a 364-residue protein sequence, read N- to C-terminus: Alanine racemase (364 aa).

Residue Lys-35 is the Proton acceptor; specific for D-alanine of the active site. Lys-35 carries the N6-(pyridoxal phosphate)lysine modification. A substrate-binding site is contributed by Arg-132. Tyr-260 (proton acceptor; specific for L-alanine) is an active-site residue. Met-308 lines the substrate pocket.

The protein belongs to the alanine racemase family. The cofactor is pyridoxal 5'-phosphate.

It carries out the reaction L-alanine = D-alanine. It functions in the pathway amino-acid biosynthesis; D-alanine biosynthesis; D-alanine from L-alanine: step 1/1. Catalyzes the interconversion of L-alanine and D-alanine. May also act on other amino acids. In Acidithiobacillus ferrooxidans (strain ATCC 23270 / DSM 14882 / CIP 104768 / NCIMB 8455) (Ferrobacillus ferrooxidans (strain ATCC 23270)), this protein is Alanine racemase (alr).